Reading from the N-terminus, the 472-residue chain is Succinate-semialdehyde dehydrogenase [NADP(+)] (472 aa).

NADP(+) is bound by residues 134-135 (WN), 158-161 (KHAS), and 210-211 (GS). Glutamate 232 (proton acceptor) is an active-site residue. Leucine 233 contributes to the NADP(+) binding site. Cysteine 266 acts as the Nucleophile in catalysis. Glutamate 363 provides a ligand contact to NADP(+).

It belongs to the aldehyde dehydrogenase family.

The catalysed reaction is succinate semialdehyde + NADP(+) + H2O = succinate + NADPH + 2 H(+). Catalyzes the NADP(+)-dependent oxidation of succinate semialdehyde to succinate. It is believed to be the main source of succinate semialdehyde dehydrogenase activity in Mycobacterium. The protein is Succinate-semialdehyde dehydrogenase [NADP(+)] (gabD1) of Mycobacterium avium (strain 104).